The chain runs to 459 residues: Trichothecene 3-O-acetyltransferase TRI101 (459 aa).

Positions 218 and 221 each coordinate Ca(2+). CoA-binding positions include Lys253, 266–269, Asp302, Gln318, and Arg343; that span reads FVST. Asp376 contributes to the Ca(2+) binding site. CoA is bound by residues Ser386 and Lys390. Glu449 serves as a coordination point for Ca(2+).

The protein belongs to the trichothecene 3-O-acetyltransferase family.

It functions in the pathway sesquiterpene biosynthesis; trichothecene biosynthesis. In terms of biological role, 3-O-acetyltransferase involved in the biosynthesis of trichothecenes, a very large family of chemically related bicyclic sesquiterpene compounds acting as mycotoxins, including T2-toxin. The biosynthesis of trichothecenes begins with the cyclization of farnesyl diphosphate to trichodiene and is catalyzed by the trichodiene synthase TRI5. Trichodiene undergoes a series of oxygenations catalyzed by the cytochrome P450 monooxygenase TRI4. TRI4 controls the addition of four oxygens at C-2, C-3, C-11, and the C-12, C-13-epoxide to form the intermediate isotrichotriol. Isotrichotriol then undergoes a non-enzymatic isomerization and cyclization to form isotrichodermol. During this process, the oxygen at the C-2 position becomes the pyran ring oxygen and the hydroxyl group at C-11 is lost. More complex type A trichothecenes are built by modifying isotrichodermol through a series of paired hydroxylation and acetylation or acylation steps. Isotrichodermol is converted to isotrichodermin by the acetyltransferase TRI101. TRI101 encodes a C-3 transacetylase that acts as a self-protection or resistance factor during biosynthesis and that the presence of a free C-3 hydroxyl group is a key component of Fusarium trichothecene phytotoxicity. A second hydroxyl group is added to C-15 by the trichothecene C-15 hydroxylase TRI11, producing 15-decalonectrin, which is then acetylated by TRI3, producing calonectrin. A third hydroxyl group is added at C-4 by the cytochrome P450 monooxygenase TRI13, converting calonectrin to 3,15-diacetoxyspirpenol, which is subsequently acetylated bythe acetyltransferase TRI7. A fourth hydroxyl group is added to C-8 by the cytochrome P450 monooxygenase TRI1, followed by the addition of an isovaleryl moiety by TRI16. Finally, the acetyl group is removed from the C-3 position by the trichothecene C-3 esterase TRI8 to produce T-2 toxin. The protein is Trichothecene 3-O-acetyltransferase TRI101 of Fusarium sporotrichioides.